The chain runs to 88 residues: Molybdopterin synthase sulfur carrier subunit (88 aa).

Gly-88 carries the post-translational modification 1-thioglycine; alternate. Gly-88 carries the glycyl adenylate; alternate modification.

Belongs to the MoaD family. MOCS2A subfamily. Heterotetramer; composed of 2 small (MOCS2A) and 2 large (MOCS2B) subunits. In terms of processing, C-terminal thiocarboxylation occurs in 2 steps, it is first acyl-adenylated (-COAMP) via the hesA/moeB/thiF part of MOCS3, then thiocarboxylated (-COSH) via the rhodanese domain of MOCS3. Widely expressed. Highest levels are found in heart and skeletal muscle. Lower levels are present in brain, kidney and pancreas. Very low levels are found in lung and peripheral blood leukocytes.

Its subcellular location is the cytoplasm. The protein resides in the cytosol. Its pathway is cofactor biosynthesis; molybdopterin biosynthesis. Acts as a sulfur carrier required for molybdopterin biosynthesis. Component of the molybdopterin synthase complex that catalyzes the conversion of precursor Z into molybdopterin by mediating the incorporation of 2 sulfur atoms into precursor Z to generate a dithiolene group. In the complex, serves as sulfur donor by being thiocarboxylated (-COSH) at its C-terminus by MOCS3. After interaction with MOCS2B, the sulfur is then transferred to precursor Z to form molybdopterin. This chain is Molybdopterin synthase sulfur carrier subunit, found in Homo sapiens (Human).